Reading from the N-terminus, the 395-residue chain is Xylose isomerase (395 aa).

Catalysis depends on residues His-54 and Asp-57. Mg(2+)-binding residues include Glu-181, Glu-217, His-220, Asp-245, Asp-255, Asp-257, and Asp-293.

Belongs to the xylose isomerase family. In terms of assembly, homotetramer. Mg(2+) is required as a cofactor.

The protein resides in the cytoplasm. It catalyses the reaction alpha-D-xylose = alpha-D-xylulofuranose. The protein is Xylose isomerase of Pseudarthrobacter chlorophenolicus (strain ATCC 700700 / DSM 12829 / CIP 107037 / JCM 12360 / KCTC 9906 / NCIMB 13794 / A6) (Arthrobacter chlorophenolicus).